A 184-amino-acid polypeptide reads, in one-letter code: Large ribosomal subunit protein uL15 (184 aa).

Positions 1–62 are disordered; that stretch reads MDLSSLRPAK…QMPMYRRLPK (62 aa). Over residues 21–35 the composition is skewed to gly residues; that stretch reads RGPGSGNGTTAGKGN.

The protein belongs to the universal ribosomal protein uL15 family. As to quaternary structure, part of the 50S ribosomal subunit.

In terms of biological role, binds to the 23S rRNA. This chain is Large ribosomal subunit protein uL15, found in Chlorobaculum parvum (strain DSM 263 / NCIMB 8327) (Chlorobium vibrioforme subsp. thiosulfatophilum).